Reading from the N-terminus, the 724-residue chain is MSNRWDSGVVRALAEARHGDAFAVLGAHPSDKGRLLRTYLPGADRVGAVLDDGQVVALDAGPEPGLFAGELPAHGGYRLRIGWPGGEQETADPYAFGPQLSDFDLHLISEGHHLQLADALGANVVEVEGVRGTRFAVWAPNASRVAVVGDFNSWDARRHPMRLRHQSGVWELFVPDVGPGAHYKYQLRGPHGHELPAKADPVARRAELAPGTASIVADPTPHQWSDDGWMATRARRQAHDAPMSIYEIHAGSWLREAGVDLDWDGLADRLIPYVADMGFTHVELMPVSEHPFGGSWGYQPLGLFAPTARFGTPDGFARFVDRCHREGIGVIVDWVPAHFPTDAHGLAHFDGTALYEHADPREGFHRDWNTLIYNHGRREVSGFLIASAMEFLQRYHVDGLRVDAVASMLYRDYSRNAGEWIPNIHGGRENYETIAFLRRLNEVVREHTPGAVMIAEESTAFPGVTAEVAHGGLGFHYKWNMGWMHDTLHYAGLDPIYRRYHHGELTFSMVYAYSERFVLPISHDEVVHGKGSLLGRMPGDDWQRFANLRAYLGFMFTHPGRKLLFMGCEFGQPTEWNHDAGLPWHLLDDPRHRGVQTLVRDLNRLYVQYPALHAHDDDPSGFAWVVGDDAGNSVVAFLRKGKRGDAPVLVVINFTPVVQHAYRIGVPQGGQWREVFNSDAGIYGGSNLGNGGSVTAEQQSMHGHAQSLPLLLPPLGAIVLTPYG.

D403 functions as the Nucleophile in the catalytic mechanism. E456 (proton donor) is an active-site residue.

The protein belongs to the glycosyl hydrolase 13 family. GlgB subfamily. In terms of assembly, monomer.

It catalyses the reaction Transfers a segment of a (1-&gt;4)-alpha-D-glucan chain to a primary hydroxy group in a similar glucan chain.. It participates in glycan biosynthesis; glycogen biosynthesis. Its function is as follows. Catalyzes the formation of the alpha-1,6-glucosidic linkages in glycogen by scission of a 1,4-alpha-linked oligosaccharide from growing alpha-1,4-glucan chains and the subsequent attachment of the oligosaccharide to the alpha-1,6 position. In Xanthomonas axonopodis pv. citri (strain 306), this protein is 1,4-alpha-glucan branching enzyme GlgB 1 (glgB1).